We begin with the raw amino-acid sequence, 196 residues long: Large ribosomal subunit protein uL5 (196 aa).

Belongs to the universal ribosomal protein uL5 family. Part of the 50S ribosomal subunit; part of the 5S rRNA/L5/L18/L25 subcomplex. Contacts the 5S rRNA and the P site tRNA. Forms a bridge to the 30S subunit in the 70S ribosome.

Functionally, this is one of the proteins that bind and probably mediate the attachment of the 5S RNA into the large ribosomal subunit, where it forms part of the central protuberance. In the 70S ribosome it contacts protein S13 of the 30S subunit (bridge B1b), connecting the 2 subunits; this bridge is implicated in subunit movement. Contacts the P site tRNA; the 5S rRNA and some of its associated proteins might help stabilize positioning of ribosome-bound tRNAs. The polypeptide is Large ribosomal subunit protein uL5 (Chlorobium phaeobacteroides (strain BS1)).